The chain runs to 798 residues: Serine/threonine-protein kinase haspin (798 aa).

Residues 1–110 (MAASLPGPGS…WKLRARPSLT (110 aa)) form a disordered region. At serine 58 the chain carries Phosphoserine. Acidic residues predominate over residues 59–70 (QSDDPDDPDDPD). A Phosphoserine; by AURKB modification is found at serine 93. The residue at position 97 (threonine 97) is a Phosphothreonine. Serine 143 is modified (phosphoserine; by AURKB). Serine 147 bears the Phosphoserine mark. Residues 275 to 350 (LVVGNGPEGP…KHQEATETSL (76 aa)) form a disordered region. The segment covering 300-315 (CQERGLQEAVRREHQE) has biased composition (basic and acidic residues). The region spanning 484-798 (LQRCEKIGEG…DLLCQHSLFK (315 aa)) is the Protein kinase domain. ATP-binding positions include 490-498 (IGEGVFGEV), lysine 511, 606-611 (EFGGID), 649-654 (DLHWGN), and 687-689 (DYT). Aspartate 649 acts as the Proton acceptor in catalysis.

Belongs to the protein kinase superfamily. Ser/Thr protein kinase family. Haspin subfamily. The cofactor is Mg(2+). In terms of processing, autophosphorylated on both serine and threonine residues. Strongly phosphorylated during mitosis but this does not appear to significantly affect its intrinsic kinase activity. Phosphorylation by AURKB is required for full activity toward histone H3 at 'Ser-3' in mitosis. Strongly expressed in testis. Also present in thymus and bone marrow and low levels observed in prostate, intestine, lung, spleen and lymph node. Expressed in fetal skin, liver, kidney and small intestine and also in proliferating but not non-proliferating cell lines.

It localises to the nucleus. It is found in the chromosome. Its subcellular location is the cytoplasm. The protein resides in the cytoskeleton. The protein localises to the spindle. It catalyses the reaction L-seryl-[protein] + ATP = O-phospho-L-seryl-[protein] + ADP + H(+). It carries out the reaction L-threonyl-[protein] + ATP = O-phospho-L-threonyl-[protein] + ADP + H(+). With respect to regulation, constitutive activity that does not require phosphorylation. Specifically inhibited by 3-(1H-indazol-5-yl)-N-propylimidazo[1,2-b]pyridazin-6-amine (CHR-6494). Its function is as follows. Serine/threonine-protein kinase that phosphorylates histone H3 at 'Thr-3' (H3T3ph) during mitosis. May act through H3T3ph to both position and modulate activation of AURKB and other components of the chromosomal passenger complex (CPC) at centromeres to ensure proper chromatid cohesion, metaphase alignment and normal progression through the cell cycle. This Homo sapiens (Human) protein is Serine/threonine-protein kinase haspin.